A 569-amino-acid polypeptide reads, in one-letter code: Phenylalanine ammonia-lyase (569 aa).

Tyrosine 78 acts as the Proton donor/acceptor in catalysis. Residues 167-169 (ASG) constitute a cross-link (5-imidazolinone (Ala-Gly)). Serine 168 is modified (2,3-didehydroalanine (Ser)). 7 residues coordinate (E)-cinnamate: asparagine 223, glutamine 311, arginine 317, asparagine 347, lysine 419, glutamate 448, and asparagine 451.

This sequence belongs to the PAL/histidase family. In terms of assembly, homotetramer. Post-translationally, contains an active site 4-methylidene-imidazol-5-one (MIO), which is formed autocatalytically by cyclization and dehydration of residues Ala-Ser-Gly.

The protein resides in the cytoplasm. It carries out the reaction L-phenylalanine = (E)-cinnamate + NH4(+). It participates in phenylpropanoid metabolism; trans-cinnamate biosynthesis; trans-cinnamate from L-phenylalanine: step 1/1. Catalyzes the non-oxidative deamination of L-phenylalanine to form trans-cinnamic acid, the first step in the phenylpropanoid pathway. In Nostoc punctiforme (strain ATCC 29133 / PCC 73102), this protein is Phenylalanine ammonia-lyase.